A 388-amino-acid polypeptide reads, in one-letter code: Processive diacylglycerol beta-glucosyltransferase (388 aa).

It belongs to the glycosyltransferase 28 family. UgtP subfamily.

Its subcellular location is the cell membrane. The enzyme catalyses a 1,2-diacyl-3-O-(beta-D-glucopyranosyl)-sn-glycerol + UDP-alpha-D-glucose = a 1,2-diacyl-3-O-(beta-D-Glc-(1-&gt;6)-beta-D-Glc)-sn-glycerol + UDP + H(+). It carries out the reaction a 1,2-diacyl-3-O-(beta-D-Glc-(1-&gt;6)-beta-D-Glc)-sn-glycerol + UDP-alpha-D-glucose = a 1,2-diacyl-3-O-(beta-D-Glc-(1-&gt;6)-beta-D-Glc-(1-&gt;6)-beta-D-Glc)-sn-glycerol + UDP + H(+). The catalysed reaction is a 1,2-diacyl-sn-glycerol + UDP-alpha-D-glucose = a 1,2-diacyl-3-O-(beta-D-glucopyranosyl)-sn-glycerol + UDP + H(+). It functions in the pathway glycolipid metabolism; diglucosyl-diacylglycerol biosynthesis. Functionally, processive glucosyltransferase involved in the biosynthesis of both the bilayer- and non-bilayer-forming membrane glucolipids. Is able to successively transfer up to three glucosyl residues to diacylglycerol (DAG), thereby catalyzing the formation of beta-monoglucosyl-DAG (3-O-(beta-D-glucopyranosyl)-1,2-diacyl-sn-glycerol), beta-diglucosyl-DAG (3-O-(beta-D-glucopyranosyl-beta-(1-&gt;6)-D-glucopyranosyl)-1,2-diacyl-sn-glycerol) and beta-triglucosyl-DAG (3-O-(beta-D-glucopyranosyl-beta-(1-&gt;6)-D-glucopyranosyl-beta-(1-&gt;6)-D-glucopyranosyl)-1,2-diacyl-sn-glycerol). Beta-diglucosyl-DAG is the predominant glycolipid found in Bacillales and is also used as a membrane anchor for lipoteichoic acid (LTA). The polypeptide is Processive diacylglycerol beta-glucosyltransferase (Bacillus thuringiensis (strain Al Hakam)).